The sequence spans 252 residues: Triosephosphate isomerase (252 aa).

10 to 12 (NWK) is a binding site for substrate. The Electrophile role is filled by histidine 96. Glutamate 168 (proton acceptor) is an active-site residue. Residues glycine 174, serine 214, and 235 to 236 (GG) contribute to the substrate site.

It belongs to the triosephosphate isomerase family. As to quaternary structure, homodimer.

The protein localises to the cytoplasm. It carries out the reaction D-glyceraldehyde 3-phosphate = dihydroxyacetone phosphate. It functions in the pathway carbohydrate biosynthesis; gluconeogenesis. The protein operates within carbohydrate degradation; glycolysis; D-glyceraldehyde 3-phosphate from glycerone phosphate: step 1/1. Involved in the gluconeogenesis. Catalyzes stereospecifically the conversion of dihydroxyacetone phosphate (DHAP) to D-glyceraldehyde-3-phosphate (G3P). The sequence is that of Triosephosphate isomerase from Streptococcus thermophilus (strain CNRZ 1066).